We begin with the raw amino-acid sequence, 287 residues long: Protein REVEILLE 2 (287 aa).

The HTH myb-type domain occupies 31–85 (TITKQREKWTEAEHEKFVEALKLYGRAWRRIEEHVGTKTAVQIRSHAQKFFTKVA). A DNA-binding region (H-T-H motif) is located at residues 58-81 (WRRIEEHVGTKTAVQIRSHAQKFF). The segment at 134–177 (QDEDNRSPTSVLSAHGSDGLGSIGSNSPNSSSAELSSHTEESLS) is disordered. Low complexity predominate over residues 156–169 (IGSNSPNSSSAELS).

It localises to the nucleus. In terms of biological role, positive regulator for cold-responsive gene expression and cold tolerance. Part of a regulatory feedback loop that controls a subset of the circadian outputs and modulates the central oscillator. Negatively self-regulates its own expression. This is Protein REVEILLE 2 (RVE2) from Arabidopsis thaliana (Mouse-ear cress).